We begin with the raw amino-acid sequence, 92 residues long: Small ribosomal subunit protein uS19 (92 aa).

This sequence belongs to the universal ribosomal protein uS19 family.

Its function is as follows. Protein S19 forms a complex with S13 that binds strongly to the 16S ribosomal RNA. The protein is Small ribosomal subunit protein uS19 of Corynebacterium diphtheriae (strain ATCC 700971 / NCTC 13129 / Biotype gravis).